The sequence spans 1500 residues: Carbamoyl-phosphate synthase [ammonia], mitochondrial (1500 aa).

The N-terminal 38 residues, 1–38 (MTRILTAFKVVRTLKTGFGFTNVTAHQKWKFSRPGIRL), are a transit peptide targeting the mitochondrion. Residues 39–218 (LSVKAQTAHI…VKVYGKGNPT (180 aa)) are anthranilate phosphoribosyltransferase homolog. Residues lysine 55, lysine 57, and lysine 119 each carry the N6-acetyllysine; alternate modification. Lysine 55 is subject to N6-glutaryllysine; alternate. Lysine 55, lysine 57, and lysine 119 each carry N6-succinyllysine; alternate. Serine 148 is modified (phosphoserine). An N6-acetyllysine; alternate mark is found at lysine 157 and lysine 171. Residue lysine 157 is modified to N6-succinyllysine; alternate. N6-glutaryllysine; alternate is present on lysine 171. N6-glutaryllysine is present on lysine 176. Lysine 182 and lysine 197 each carry N6-acetyllysine. Lysine 207, lysine 210, lysine 214, lysine 219, and lysine 228 each carry N6-acetyllysine; alternate. N6-glutaryllysine; alternate occurs at positions 207, 210, 214, 219, and 228. Position 207 is an N6-succinyllysine; alternate (lysine 207). Lysine 214 is modified (N6-succinyllysine; alternate). The 186-residue stretch at 219–404 (KVVAVDCGIK…FSLIKKGKAT (186 aa)) folds into the Glutamine amidotransferase type-1 domain. At lysine 237 the chain carries N6-glutaryllysine. 4 positions are modified to N6-acetyllysine; alternate: lysine 280, lysine 287, lysine 307, and lysine 310. Lysine 280 carries the N6-glutaryllysine; alternate modification. Lysine 287 and lysine 307 each carry N6-succinyllysine; alternate. N6-glutaryllysine; alternate is present on residues lysine 307 and lysine 310. Lysine 400 bears the N6-succinyllysine mark. Lysine 402, lysine 412, lysine 453, and lysine 458 each carry N6-glutaryllysine; alternate. N6-succinyllysine; alternate occurs at positions 402 and 412. Residues lysine 412, lysine 453, lysine 458, lysine 522, lysine 527, and lysine 532 each carry the N6-acetyllysine; alternate modification. N6-succinyllysine; alternate occurs at positions 458, 522, and 527. N6-glutaryllysine; alternate occurs at positions 527 and 532. Serine 537 is subject to Phosphoserine; alternate. The O-linked (GlcNAc) serine; alternate glycan is linked to serine 537. Serine 540 carries the post-translational modification Phosphoserine. The ATP-grasp 1 domain occupies 551–743 (SDKLNEINEK…LAFIAAKIAL (193 aa)). N6-acetyllysine; alternate is present on residues lysine 553 and lysine 560. At lysine 553 the chain carries N6-glutaryllysine; alternate. Lysine 553 and lysine 560 each carry N6-succinyllysine; alternate. The residue at position 569 (serine 569) is a Phosphoserine. Residues lysine 575 and lysine 612 each carry the N6-acetyllysine; alternate modification. N6-succinyllysine; alternate is present on residues lysine 575 and lysine 612. Lysine 630 carries the post-translational modification N6-acetyllysine. An N6-glutaryllysine modification is found at lysine 728. An N6-acetyllysine; alternate mark is found at lysine 751, lysine 757, lysine 772, lysine 793, lysine 811, and lysine 831. Residues lysine 751 and lysine 757 each carry the N6-succinyllysine; alternate modification. Residues lysine 757, lysine 772, lysine 793, and lysine 811 each carry the N6-glutaryllysine; alternate modification. At lysine 793 the chain carries N6-succinyllysine; alternate. The residue at position 831 (lysine 831) is an N6-succinyllysine; alternate. Residue serine 835 is modified to Phosphoserine. N6-acetyllysine; alternate is present on residues lysine 841 and lysine 856. N6-glutaryllysine; alternate occurs at positions 841 and 856. N6-glutaryllysine is present on lysine 869. 3 positions are modified to N6-acetyllysine; alternate: lysine 875, lysine 889, and lysine 892. Lysine 875, lysine 889, and lysine 892 each carry N6-glutaryllysine; alternate. N6-succinyllysine; alternate is present on residues lysine 875, lysine 889, and lysine 892. Residues serine 896 and serine 898 each carry the phosphoserine modification. At lysine 905 the chain carries N6-glutaryllysine. Lysine 908, lysine 915, and lysine 919 each carry N6-acetyllysine; alternate. N6-glutaryllysine; alternate occurs at positions 908, 915, and 919. Residues lysine 915 and lysine 919 each carry the N6-succinyllysine; alternate modification. Lysine 935 carries the post-translational modification N6-acetyllysine. Serine 1036 carries the post-translational modification Phosphoserine. At lysine 1074 the chain carries N6-acetyllysine; alternate. An N6-glutaryllysine; alternate modification is found at lysine 1074. Lysine 1074 carries the post-translational modification N6-succinyllysine; alternate. 3 positions are modified to phosphoserine: serine 1079, serine 1090, and serine 1093. One can recognise an ATP-grasp 2 domain in the interval 1093 to 1284 (SAVLDELKVA…FIDVATKVMI (192 aa)). An N6-acetyllysine; alternate modification is found at lysine 1100. Lysine 1100 is subject to N6-succinyllysine; alternate. Lysine 1149 is subject to N6-succinyllysine. Lysine 1150 carries the post-translational modification N6-glutaryllysine. N6-acetyllysine; alternate is present on residues lysine 1168 and lysine 1183. Lysine 1168 and lysine 1183 each carry N6-glutaryllysine; alternate. 2 positions are modified to N6-succinyllysine; alternate: lysine 1168 and lysine 1183. Serine 1203 bears the Phosphoserine mark. Lysine 1222 is modified (N6-acetyllysine). Lysine 1224 carries the N6-glutaryllysine modification. An N6-acetyllysine; alternate mark is found at lysine 1232, lysine 1269, and lysine 1291. Residues lysine 1232, lysine 1269, and lysine 1291 each carry the N6-succinyllysine; alternate modification. Serine 1331 carries an O-linked (GlcNAc) serine glycan. Threonine 1332 carries O-linked (GlcNAc) threonine glycosylation. The region spanning 1355 to 1500 (FKIPQKGILI…YRQYSAGKAA (146 aa)) is the MGS-like domain. Lysine 1356 is modified (N6-acetyllysine; alternate). N6-glutaryllysine; alternate occurs at positions 1356 and 1360. Residues lysine 1356 and lysine 1360 each carry the N6-succinyllysine; alternate modification. N-acetyl-L-glutamate is bound by residues threonine 1391, threonine 1394, and tryptophan 1410. Phosphoserine occurs at positions 1419 and 1431. N-acetyl-L-glutamate contacts are provided by asparagine 1437 and asparagine 1440. Lysine 1444 is modified (N6-acetyllysine; alternate). An N6-succinyllysine; alternate modification is found at lysine 1444. Residue asparagine 1449 coordinates N-acetyl-L-glutamate. An N6-acetyllysine; alternate mark is found at lysine 1471, lysine 1479, and lysine 1486. Lysine 1471, lysine 1479, and lysine 1486 each carry N6-succinyllysine; alternate. Residues lysine 1479 and lysine 1486 each carry the N6-glutaryllysine; alternate modification.

Can form homooligomers (monomers as predominant form and dimers). In terms of processing, undergoes proteolytic cleavage in the C-terminal region corresponding to the loss of approximately 12 AA residues from the C-terminus. Succinylated at Lys-287 and Lys-1291. Desuccinylated at Lys-1291 by SIRT5, leading to activation. Post-translationally, glutarylated. Glutarylation levels increase during fasting. Deglutarylated by SIRT5 at Lys-55, Lys-219, Lys-412, Lys-889, Lys-892, Lys-915, Lys-1360 and Lys-1486, leading to activation. As to expression, primarily in the liver and small intestine.

The protein resides in the mitochondrion. The protein localises to the nucleus. Its subcellular location is the nucleolus. It is found in the cell membrane. The catalysed reaction is hydrogencarbonate + NH4(+) + 2 ATP = carbamoyl phosphate + 2 ADP + phosphate + 2 H(+). Requires N-acetyl-L-glutamate (NAG) as an allosteric activator. Activated by glycerol in the absence of NAG, whereas in the presence of NAG it is inhibited by increasing concentrations of glycerol. In terms of biological role, involved in the urea cycle of ureotelic animals where the enzyme plays an important role in removing excess ammonia from the cell. This is Carbamoyl-phosphate synthase [ammonia], mitochondrial (CPS1) from Homo sapiens (Human).